The primary structure comprises 309 residues: Peptide methionine sulfoxide reductase MsrA/MsrB (309 aa).

The interval 1 to 153 is peptide methionine sulfoxide reductase A; it reads MIYLAGGCFW…PNGYCHIDIN (153 aa). C8 is an active-site residue. Residues 170 to 293 form the MsrB domain; that stretch reads ATEIKEKLSA…NSLSITFIPK (124 aa). Residue C282 is the Nucleophile of the active site.

In the N-terminal section; belongs to the MsrA Met sulfoxide reductase family. The protein in the C-terminal section; belongs to the MsrB Met sulfoxide reductase family.

The catalysed reaction is L-methionyl-[protein] + [thioredoxin]-disulfide + H2O = L-methionyl-(S)-S-oxide-[protein] + [thioredoxin]-dithiol. The enzyme catalyses [thioredoxin]-disulfide + L-methionine + H2O = L-methionine (S)-S-oxide + [thioredoxin]-dithiol. It carries out the reaction L-methionyl-[protein] + [thioredoxin]-disulfide + H2O = L-methionyl-(R)-S-oxide-[protein] + [thioredoxin]-dithiol. In terms of biological role, has an important function as a repair enzyme for proteins that have been inactivated by oxidation. Catalyzes the reversible oxidation-reduction of methionine sulfoxide in proteins to methionine. The sequence is that of Peptide methionine sulfoxide reductase MsrA/MsrB (msrAB) from Streptococcus pyogenes serotype M1.